The sequence spans 307 residues: MTGMESGENLENMEDILARHRKENKDLQNKITGMKKQATKSKRKEVNSKCLDLQDKLKTKQENEIRDWKIANNEVFDAEQEDEVTPEKLLEQLSISRDEKEQQNVPVQQQQQGQTKKRRNRQKERLAKRDAAIAKMKEEAALEASKQPDLKKMEQESIDQLCELKKLKQFDIQPDGHCLFASILDQLKLRHDPKKLDQDMDVMKLRWLSCNYVQEHRDDFIPYLFDEETMKMKDIDEYTKEMEHTAQWGGEIEILALSHVFDCPISILMSGRPIQVYNECGKNPELKLVYYKHSYALGEHYNSLHDS.

Disordered regions lie at residues Glu-23–Val-46 and Ser-96–Asp-130. Over residues Gln-103–Gln-114 the composition is skewed to low complexity. The 141-residue stretch at Leu-167–Ser-307 folds into the OTU domain.

This chain is OTU domain-containing protein 2 (OTU2), found in Saccharomyces cerevisiae (strain ATCC 204508 / S288c) (Baker's yeast).